Reading from the N-terminus, the 385-residue chain is tRNA-specific 2-thiouridylase MnmA (385 aa).

Residues 18-25 and leucine 44 contribute to the ATP site; that span reads AMSGGVDS. The active-site Nucleophile is the cysteine 112. Cysteine 112 and cysteine 209 are oxidised to a cystine. Glycine 136 contacts ATP. The segment at 159 to 161 is interaction with tRNA; that stretch reads RDQ. Cysteine 209 serves as the catalytic Cysteine persulfide intermediate.

This sequence belongs to the MnmA/TRMU family.

Its subcellular location is the cytoplasm. It carries out the reaction S-sulfanyl-L-cysteinyl-[protein] + uridine(34) in tRNA + AH2 + ATP = 2-thiouridine(34) in tRNA + L-cysteinyl-[protein] + A + AMP + diphosphate + H(+). In terms of biological role, catalyzes the 2-thiolation of uridine at the wobble position (U34) of tRNA, leading to the formation of s(2)U34. This is tRNA-specific 2-thiouridylase MnmA from Methylorubrum extorquens (strain PA1) (Methylobacterium extorquens).